The chain runs to 290 residues: Cbb3-type cytochrome c oxidase subunit CcoP (290 aa).

The disordered stretch occupies residues 1 to 22 (MSVKPTKQKPGEPPTTGHSWDG). At 1 to 37 (MSVKPTKQKPGEPPTTGHSWDGIEEFDNPMPRWWLWT) the chain is on the cytoplasmic side. A helical transmembrane segment spans residues 38-58 (FYVTIVWAIGYSILYPAWPLI). Residues 59–290 (NGATNGLIGH…VYVHGLGGGE (232 aa)) are Periplasmic-facing. 2 consecutive Cytochrome c domains span residues 109-199 (YATN…LQIS) and 206-287 (ALSA…HGLG). Heme c is bound by residues cysteine 122, cysteine 125, histidine 126, methionine 174, cysteine 219, cysteine 222, histidine 223, and methionine 264.

The protein belongs to the CcoP / FixP family. Component of the cbb3-type cytochrome c oxidase at least composed of CcoN, CcoO, CcoQ and CcoP. Heme c serves as cofactor.

The protein resides in the cell inner membrane. It functions in the pathway energy metabolism; oxidative phosphorylation. In terms of biological role, C-type cytochrome. Part of the cbb3-type cytochrome c oxidase complex. CcoP subunit is required for transferring electrons from donor cytochrome c via its heme groups to CcoO subunit. From there, electrons are shuttled to the catalytic binuclear center of CcoN subunit where oxygen reduction takes place. The complex also functions as a proton pump. The polypeptide is Cbb3-type cytochrome c oxidase subunit CcoP (Cereibacter sphaeroides (strain ATCC 17023 / DSM 158 / JCM 6121 / CCUG 31486 / LMG 2827 / NBRC 12203 / NCIMB 8253 / ATH 2.4.1.) (Rhodobacter sphaeroides)).